Here is a 261-residue protein sequence, read N- to C-terminus: 1,6-dihydroxycyclohexa-2,4-diene-1-carboxylate dehydrogenase (261 aa).

Residue 13 to 37 (IVTGAAQGIGRGVALRIAQEGGCLI) participates in NAD(+) binding. Serine 145 contacts substrate. The active-site Proton acceptor is tyrosine 156.

This sequence belongs to the short-chain dehydrogenases/reductases (SDR) family. Homodimer.

The enzyme catalyses (1R,6S)-1,6-dihydroxycyclohexa-2,4-diene-1-carboxylate + NAD(+) = catechol + CO2 + NADH. It participates in aromatic compound metabolism; benzoate degradation via hydroxylation; catechol from benzoate: step 2/2. Functionally, degradation of 2-hydro-1,2-dihydroxy benzoate (DHB) to catechol. This chain is 1,6-dihydroxycyclohexa-2,4-diene-1-carboxylate dehydrogenase (benD), found in Acinetobacter baylyi (strain ATCC 33305 / BD413 / ADP1).